We begin with the raw amino-acid sequence, 400 residues long: Lysophospholipid transporter LplT (400 aa).

A run of 12 helical transmembrane segments spans residues Val19–Ala39, Val53–Ala73, Ala91–Ile111, Leu139–Ala159, Ile164–Ile184, Ser195–Trp213, Leu227–Leu247, Tyr257–Val277, Thr281–Leu301, Ala304–Val324, Asn352–Ala372, and Val373–Trp393.

The protein belongs to the major facilitator superfamily. LplT (TC 2.A.1.42) family.

Its subcellular location is the cell inner membrane. In terms of biological role, catalyzes the facilitated diffusion of 2-acyl-glycero-3-phosphoethanolamine (2-acyl-GPE) into the cell. The protein is Lysophospholipid transporter LplT of Salmonella schwarzengrund (strain CVM19633).